Reading from the N-terminus, the 551-residue chain is Cleavage and polyadenylation specificity factor subunit 6 (551 aa).

The RRM domain occupies 81–161; the sequence is IALYIGNLTW…QNPVVTPCNK (81 aa). At threonine 157 the chain carries Phosphothreonine. Positions 169 to 180 are enriched in polar residues; the sequence is MQSRKTTQSGQM. 2 disordered regions span residues 169–410 and 477–551; these read MQSR…TPLS and LHGI…YRHR. Composition is skewed to pro residues over residues 237–265, 285–366, and 377–388; these read TRPPLGPPGPPGPPGPPPPGQVLPPPLAG, GQPP…PPPA, and GPPPTDPYGRPP. 2 stretches are compositionally biased toward basic and acidic residues: residues 389–404 and 489–503; these read PYDRGDYGPPGREMDA and SRRERSRERDHSRSR. 5 positions are modified to phosphoserine: serine 494, serine 500, serine 511, serine 513, and serine 525. The segment covering 504 to 514 has biased composition (basic residues); that stretch reads EKSRRHKSRSR. Basic and acidic residues predominate over residues 515–551; that stretch reads DRHDDYYRERSRERERHRDRDRDRDRERDREREYRHR.

This sequence belongs to the RRM CPSF6/7 family. As to quaternary structure, component of the cleavage factor Im (CFIm) complex.

It localises to the nucleus. It is found in the nucleoplasm. The protein localises to the nucleus speckle. The protein resides in the cytoplasm. Functionally, component of the cleavage factor Im (CFIm) complex that functions as an activator of the pre-mRNA 3'-end cleavage and polyadenylation processing required for the maturation of pre-mRNA into functional mRNAs. CFIm contributes to the recruitment of multiprotein complexes on specific sequences on the pre-mRNA 3'-end, so called cleavage and polyadenylation signals (pA signals). Most pre-mRNAs contain multiple pA signals, resulting in alternative cleavage and polyadenylation (APA) producing mRNAs with variable 3'-end formation. The CFIm complex acts as a key regulator of cleavage and polyadenylation site choice during APA through its binding to 5'-UGUA-3' elements localized in the 3'-untranslated region (UTR) for a huge number of pre-mRNAs. Plays a role in mRNA export. This chain is Cleavage and polyadenylation specificity factor subunit 6, found in Gallus gallus (Chicken).